The primary structure comprises 468 residues: tRNA (guanine(37)-N(1))-methyltransferase 1 (468 aa).

S-adenosyl-L-methionine is bound by residues histidine 207, 245–246 (DL), and 273–274 (DA). The segment at 301 to 348 (KEAAVSRGGETNSSGEEIRESNASINEPLGANKKPSGTTKTENGVGKD) is disordered. A compositionally biased stretch (polar residues) spans 309 to 325 (GETNSSGEEIRESNASI). Residue asparagine 380 coordinates S-adenosyl-L-methionine.

This sequence belongs to the class I-like SAM-binding methyltransferase superfamily. TRM5/TYW2 family. Monomer.

The protein localises to the mitochondrion matrix. Its subcellular location is the nucleus. It is found in the cytoplasm. The enzyme catalyses guanosine(37) in tRNA + S-adenosyl-L-methionine = N(1)-methylguanosine(37) in tRNA + S-adenosyl-L-homocysteine + H(+). Specifically methylates the N1 position of guanosine-37 in various cytoplasmic and mitochondrial tRNAs. Methylation is not dependent on the nature of the nucleoside 5' of the target nucleoside. This is the first step in the biosynthesis of wybutosine (yW), a modified base adjacent to the anticodon of tRNAs and required for accurate decoding. The polypeptide is tRNA (guanine(37)-N(1))-methyltransferase 1 (Arabidopsis thaliana (Mouse-ear cress)).